Consider the following 294-residue polypeptide: MTHDTFTGVFPAMTTPFDDEERIDHETLRDHAQRLEAAGVDGLVPVGTTGESATMSHDEHIEVVETVVDAVDDVPVIAGSGSNNTREALELSERAADAGADGLLLISPYYNIPEPEGMETHYRTVADAVDLPQIIYNVPGRTGRNIAVETAVSLAEHENIVGYKAASGDLNRVGEVIERTREENFEVLSGDDALTLPIIAQGGTGCISVSANVEPERTVALVGAALEGDFTRARELQYELGDLFRTLFIETNPIPINEAMDMRDIHSSTMRSPLNPLQPEHREQLREVLADLER.

Thr49 lines the pyruvate pocket. The active-site Proton donor/acceptor is Tyr136. Lys164 functions as the Schiff-base intermediate with substrate in the catalytic mechanism. Ile207 contacts pyruvate.

This sequence belongs to the DapA family. As to quaternary structure, homotetramer; dimer of dimers.

The protein resides in the cytoplasm. It carries out the reaction L-aspartate 4-semialdehyde + pyruvate = (2S,4S)-4-hydroxy-2,3,4,5-tetrahydrodipicolinate + H2O + H(+). It functions in the pathway amino-acid biosynthesis; L-lysine biosynthesis via DAP pathway; (S)-tetrahydrodipicolinate from L-aspartate: step 3/4. Functionally, catalyzes the condensation of (S)-aspartate-beta-semialdehyde [(S)-ASA] and pyruvate to 4-hydroxy-tetrahydrodipicolinate (HTPA). In Natronomonas pharaonis (strain ATCC 35678 / DSM 2160 / CIP 103997 / JCM 8858 / NBRC 14720 / NCIMB 2260 / Gabara) (Halobacterium pharaonis), this protein is 4-hydroxy-tetrahydrodipicolinate synthase.